We begin with the raw amino-acid sequence, 273 residues long: Bifunctional protein FolD (273 aa).

Residues 152-154 (GRS), T179, and I220 each bind NADP(+).

This sequence belongs to the tetrahydrofolate dehydrogenase/cyclohydrolase family. Homodimer.

The enzyme catalyses (6R)-5,10-methylene-5,6,7,8-tetrahydrofolate + NADP(+) = (6R)-5,10-methenyltetrahydrofolate + NADPH. The catalysed reaction is (6R)-5,10-methenyltetrahydrofolate + H2O = (6R)-10-formyltetrahydrofolate + H(+). Its pathway is one-carbon metabolism; tetrahydrofolate interconversion. Catalyzes the oxidation of 5,10-methylenetetrahydrofolate to 5,10-methenyltetrahydrofolate and then the hydrolysis of 5,10-methenyltetrahydrofolate to 10-formyltetrahydrofolate. This is Bifunctional protein FolD from Petrotoga mobilis (strain DSM 10674 / SJ95).